Consider the following 159-residue polypeptide: UPF0262 protein PHZ_c2197 (159 aa).

It belongs to the UPF0262 family.

This is UPF0262 protein PHZ_c2197 from Phenylobacterium zucineum (strain HLK1).